Reading from the N-terminus, the 496-residue chain is Cytochrome P450 71B1 (496 aa).

Residue cysteine 436 participates in heme binding.

Belongs to the cytochrome P450 family. Heme is required as a cofactor.

This is Cytochrome P450 71B1 (CYP71B1) from Thlaspi arvense (Field penny-cress).